Consider the following 183-residue polypeptide: Ribonuclease H (183 aa).

Residues 2–151 (SQARFIAFSD…VDQLAQAAAR (150 aa)) form the RNase H type-1 domain. Mg(2+)-binding residues include aspartate 11, glutamate 57, aspartate 79, and aspartate 143.

This sequence belongs to the RNase H family. As to quaternary structure, monomer. Mg(2+) serves as cofactor.

The protein localises to the cytoplasm. It carries out the reaction Endonucleolytic cleavage to 5'-phosphomonoester.. Endonuclease that specifically degrades the RNA of RNA-DNA hybrids. In Anaeromyxobacter dehalogenans (strain 2CP-C), this protein is Ribonuclease H.